The chain runs to 111 residues: Cell division protein FtsB (111 aa).

Residues 1–3 (MGK) are Cytoplasmic-facing. The helical transmembrane segment at 4–21 (LTLLLLILLGWLQYSLWL) threads the bilayer. At 22–111 (GKNGIHDYVR…TNTSSNNTQR (90 aa)) the chain is on the periplasmic side. Residues 33–63 (KDDVVVQQGNNAKLKDRNEQLFAEIDDLNGG) adopt a coiled-coil conformation. The segment at 88 to 111 (VPESNHRNANTPSSTNTSSNNTQR) is disordered. Over residues 97–111 (NTPSSTNTSSNNTQR) the composition is skewed to low complexity.

Belongs to the FtsB family. Part of a complex composed of FtsB, FtsL and FtsQ.

It localises to the cell inner membrane. Functionally, essential cell division protein. May link together the upstream cell division proteins, which are predominantly cytoplasmic, with the downstream cell division proteins, which are predominantly periplasmic. The protein is Cell division protein FtsB of Pectobacterium atrosepticum (strain SCRI 1043 / ATCC BAA-672) (Erwinia carotovora subsp. atroseptica).